The chain runs to 350 residues: 26S proteasome non-ATPase regulatory subunit 8 (350 aa).

A disordered region spans residues 1–24; it reads MFIKGRAPRAPPRERRRATRGGLR. At serine 106 the chain carries Phosphoserine. In terms of domain architecture, PCI spans 162–331; sequence PSFERYMAQL…QQKPEDTTIP (170 aa). A Glycyl lysine isopeptide (Lys-Gly) (interchain with G-Cter in SUMO2) cross-link involves residue lysine 297.

Belongs to the proteasome subunit S14 family. As to quaternary structure, component of the 19S proteasome regulatory particle complex. The 26S proteasome consists of a 20S core particle (CP) and two 19S regulatory subunits (RP). The regulatory particle is made of a lid composed of 9 subunits including PSMD8, a base containing 6 ATPases and few additional components. Interacts with DDI2. Interacts with TASOR.

In terms of biological role, component of the 26S proteasome, a multiprotein complex involved in the ATP-dependent degradation of ubiquitinated proteins. This complex plays a key role in the maintenance of protein homeostasis by removing misfolded or damaged proteins, which could impair cellular functions, and by removing proteins whose functions are no longer required. Therefore, the proteasome participates in numerous cellular processes, including cell cycle progression, apoptosis, or DNA damage repair. The polypeptide is 26S proteasome non-ATPase regulatory subunit 8 (PSMD8) (Homo sapiens (Human)).